Here is a 265-residue protein sequence, read N- to C-terminus: MPQTPSTRWCPTPEQLMILEEMYRSGVRTPNAAEIQQITAHLAYYGRIEGKNVFYWFQNHKARERQRLRRRLCARHQQQYAQQQQQATAAAPASSPNSSATLLAPPAAGGSSAPCVHPAVMQLHHHHHPYATSFSMPHLGYLGQQAATVTPVLNPAAAGMVDLAGAGAGNRATGAGGAYGGGAGLYNSCSSNQLEVWDATEPMDHCNASCGAASGSSDEGGAAHLQLPACCRRPLKTLDLFPTKSTGLKDECSSSKSSSCSTSTN.

A DNA-binding region (homeobox; WUS-type) is located at residues 4–68 (TPSTRWCPTP…NHKARERQRL (65 aa)). Disordered stretches follow at residues 77 to 107 (QQQY…APPA) and 242 to 265 (PTKS…TSTN). Low complexity predominate over residues 254–265 (SSKSSSCSTSTN).

Belongs to the WUS homeobox family. Predominantly expressed in tissues enriched for shoot meristems and young lateral organ primordia. First expressed in lateral domains of shoot meristems. It is then expressed in the margins of young lateral organ primordia. Not expressed in roots, seedling leaves or fully expanded coleoptiles. Also expressed in vegetative shoot apices (five leaf primordia and the SAM) and in the male inflorescence. Expressed at high level in the female inflorescence.

Its subcellular location is the nucleus. Functionally, probable transcription factor required to initiate organ founder cells in a lateral domain of shoot meristems. Involved in leaf formation. This Zea mays (Maize) protein is WUSCHEL-related homeobox 3B (WOX3B).